The primary structure comprises 863 residues: Leucine--tRNA ligase (863 aa).

Positions 42–52 (PYPSGRLHMGH) match the 'HIGH' region motif. The 'KMSKS' region signature appears at 618 to 622 (KMSKS). Residue lysine 621 participates in ATP binding.

This sequence belongs to the class-I aminoacyl-tRNA synthetase family.

The protein localises to the cytoplasm. It carries out the reaction tRNA(Leu) + L-leucine + ATP = L-leucyl-tRNA(Leu) + AMP + diphosphate. This chain is Leucine--tRNA ligase, found in Colwellia psychrerythraea (strain 34H / ATCC BAA-681) (Vibrio psychroerythus).